We begin with the raw amino-acid sequence, 315 residues long: 4-diphosphocytidyl-2-C-methyl-D-erythritol kinase (315 aa).

The active site involves lysine 8. Position 93-103 (93-103 (PVAAGLAGGSS)) interacts with ATP. Aspartate 135 is an active-site residue.

The protein belongs to the GHMP kinase family. IspE subfamily.

It catalyses the reaction 4-CDP-2-C-methyl-D-erythritol + ATP = 4-CDP-2-C-methyl-D-erythritol 2-phosphate + ADP + H(+). Its pathway is isoprenoid biosynthesis; isopentenyl diphosphate biosynthesis via DXP pathway; isopentenyl diphosphate from 1-deoxy-D-xylulose 5-phosphate: step 3/6. In terms of biological role, catalyzes the phosphorylation of the position 2 hydroxy group of 4-diphosphocytidyl-2C-methyl-D-erythritol. In Heliobacterium modesticaldum (strain ATCC 51547 / Ice1), this protein is 4-diphosphocytidyl-2-C-methyl-D-erythritol kinase.